A 335-amino-acid chain; its full sequence is Tetraacyldisaccharide 4'-kinase (335 aa).

58 to 65 (TVGGNGKT) contacts ATP.

It belongs to the LpxK family.

The catalysed reaction is a lipid A disaccharide + ATP = a lipid IVA + ADP + H(+). The protein operates within glycolipid biosynthesis; lipid IV(A) biosynthesis; lipid IV(A) from (3R)-3-hydroxytetradecanoyl-[acyl-carrier-protein] and UDP-N-acetyl-alpha-D-glucosamine: step 6/6. Functionally, transfers the gamma-phosphate of ATP to the 4'-position of a tetraacyldisaccharide 1-phosphate intermediate (termed DS-1-P) to form tetraacyldisaccharide 1,4'-bis-phosphate (lipid IVA). The chain is Tetraacyldisaccharide 4'-kinase from Dichelobacter nodosus (strain VCS1703A).